The chain runs to 485 residues: Glutamate--tRNA ligase (485 aa).

Residues 12 to 22 (PSPTGEPHVGT) carry the 'HIGH' region motif. Zn(2+) contacts are provided by Cys-109, Cys-111, Cys-136, and His-138. Residues 253-257 (KLSKR) carry the 'KMSKS' region motif. Residue Lys-256 participates in ATP binding.

The protein belongs to the class-I aminoacyl-tRNA synthetase family. Glutamate--tRNA ligase type 1 subfamily. As to quaternary structure, monomer. Zn(2+) serves as cofactor.

Its subcellular location is the cytoplasm. It carries out the reaction tRNA(Glu) + L-glutamate + ATP = L-glutamyl-tRNA(Glu) + AMP + diphosphate. Functionally, catalyzes the attachment of glutamate to tRNA(Glu) in a two-step reaction: glutamate is first activated by ATP to form Glu-AMP and then transferred to the acceptor end of tRNA(Glu). In Agrobacterium fabrum (strain C58 / ATCC 33970) (Agrobacterium tumefaciens (strain C58)), this protein is Glutamate--tRNA ligase.